Here is a 632-residue protein sequence, read N- to C-terminus: 1-deoxy-D-xylulose-5-phosphate synthase (632 aa).

Thiamine diphosphate-binding positions include H77 and G118–S120. Residue D149 coordinates Mg(2+). Thiamine diphosphate contacts are provided by residues G150–A151, N178, Y289, and E372. N178 provides a ligand contact to Mg(2+).

Belongs to the transketolase family. DXPS subfamily. Homodimer. Mg(2+) serves as cofactor. It depends on thiamine diphosphate as a cofactor.

It catalyses the reaction D-glyceraldehyde 3-phosphate + pyruvate + H(+) = 1-deoxy-D-xylulose 5-phosphate + CO2. It functions in the pathway metabolic intermediate biosynthesis; 1-deoxy-D-xylulose 5-phosphate biosynthesis; 1-deoxy-D-xylulose 5-phosphate from D-glyceraldehyde 3-phosphate and pyruvate: step 1/1. Catalyzes the acyloin condensation reaction between C atoms 2 and 3 of pyruvate and glyceraldehyde 3-phosphate to yield 1-deoxy-D-xylulose-5-phosphate (DXP). This is 1-deoxy-D-xylulose-5-phosphate synthase from Listeria innocua serovar 6a (strain ATCC BAA-680 / CLIP 11262).